A 192-amino-acid chain; its full sequence is Ion-translocating oxidoreductase complex subunit A (192 aa).

6 helical membrane passes run 5–25 (LLLL…FLGL), 39–59 (IGMS…SYLV), 65–85 (LPFD…AVVV), 102–122 (ALGI…VALL), 134–154 (AIFG…FSAM), and 171–191 (AIAM…TGLV).

The protein belongs to the NqrDE/RnfAE family. In terms of assembly, the complex is composed of six subunits: RnfA, RnfB, RnfC, RnfD, RnfE and RnfG.

It localises to the cell inner membrane. Part of a membrane-bound complex that couples electron transfer with translocation of ions across the membrane. The polypeptide is Ion-translocating oxidoreductase complex subunit A (Shewanella pealeana (strain ATCC 700345 / ANG-SQ1)).